The sequence spans 651 residues: J domain-containing protein required for chloroplast accumulation response 1 (651 aa).

Residues 1 to 17 (MQTLPSSETVLLGSNSA) are compositionally biased toward polar residues. Disordered stretches follow at residues 1 to 56 (MQTL…TRHS), 114 to 138 (GSRI…QFSL), 156 to 176 (LNKN…SKAD), 250 to 291 (KLGK…TDLK), and 308 to 526 (KPLD…IDEP). Position 56 is a phosphoserine (S56). The segment covering 126 to 137 (SSSGTSSPSQFS) has biased composition (low complexity). Basic and acidic residues-rich tracts occupy residues 250-259 (KLGKNEEGDG), 281-291 (TKEEKTETDLK), 337-357 (IFHE…EVRK), 405-416 (VGKDGVKGKVSD), 441-456 (RAKE…DGSN), and 488-497 (QKKDSDRESM). The stretch at 532-562 (DVEDITQDENKMEEANKDAEEIKNIDAKIRK) forms a coiled coil. Residues 586 to 651 (SGWKPVPLMD…WDHFNTLGPV (66 aa)) enclose the J domain.

In terms of tissue distribution, expressed in leaves and stems, but not in roots.

The protein resides in the cytoplasm. Its function is as follows. Required for chloroplast photorelocation movement; chloroplast accumulation upon low blue light and for chloroplast movement to the bottom of cells in darkness, by modulating chloroplast actin (Cp-actin) filaments distribution, appearance and disappearance. May mediate a slight resistance to aluminum in root hair cells. This chain is J domain-containing protein required for chloroplast accumulation response 1 (JAC1), found in Arabidopsis thaliana (Mouse-ear cress).